We begin with the raw amino-acid sequence, 259 residues long: 3-methyl-2-oxobutanoate hydroxymethyltransferase (259 aa).

Mg(2+)-binding residues include Asp44 and Asp83. 3-methyl-2-oxobutanoate contacts are provided by residues 44-45 (DS), Asp83, and Lys112. Glu114 contacts Mg(2+). The active-site Proton acceptor is the Glu177.

It belongs to the PanB family. As to quaternary structure, homodecamer; pentamer of dimers. Requires Mg(2+) as cofactor.

Its subcellular location is the cytoplasm. It carries out the reaction 3-methyl-2-oxobutanoate + (6R)-5,10-methylene-5,6,7,8-tetrahydrofolate + H2O = 2-dehydropantoate + (6S)-5,6,7,8-tetrahydrofolate. The protein operates within cofactor biosynthesis; (R)-pantothenate biosynthesis; (R)-pantoate from 3-methyl-2-oxobutanoate: step 1/2. Functionally, catalyzes the reversible reaction in which hydroxymethyl group from 5,10-methylenetetrahydrofolate is transferred onto alpha-ketoisovalerate to form ketopantoate. This is 3-methyl-2-oxobutanoate hydroxymethyltransferase from Nitratiruptor sp. (strain SB155-2).